The chain runs to 827 residues: Leucine--tRNA ligase (827 aa).

A 'HIGH' region motif is present at residues 46–56 (PYPSGRIHMGH). Residues 585-589 (KMSKS) carry the 'KMSKS' region motif. Lysine 588 contacts ATP.

Belongs to the class-I aminoacyl-tRNA synthetase family.

It localises to the cytoplasm. The catalysed reaction is tRNA(Leu) + L-leucine + ATP = L-leucyl-tRNA(Leu) + AMP + diphosphate. The sequence is that of Leucine--tRNA ligase from Desulfotalea psychrophila (strain LSv54 / DSM 12343).